A 393-amino-acid polypeptide reads, in one-letter code: Phosphoglycerate kinase (393 aa).

Substrate is bound by residues 21 to 23 (DMN), arginine 36, 59 to 62 (HLGR), arginine 114, and arginine 147. Residues lysine 198, glutamate 320, and 346-349 (GGDT) contribute to the ATP site.

Belongs to the phosphoglycerate kinase family. In terms of assembly, monomer.

The protein resides in the cytoplasm. It catalyses the reaction (2R)-3-phosphoglycerate + ATP = (2R)-3-phospho-glyceroyl phosphate + ADP. Its pathway is carbohydrate degradation; glycolysis; pyruvate from D-glyceraldehyde 3-phosphate: step 2/5. This chain is Phosphoglycerate kinase, found in Thiobacillus denitrificans (strain ATCC 25259 / T1).